The chain runs to 274 residues: Large ribosomal subunit protein uL2c (274 aa).

Disordered regions lie at residues 1–22 (MAIH…DSQV) and 225–254 (PVDH…PALG).

The protein belongs to the universal ribosomal protein uL2 family. In terms of assembly, part of the 50S ribosomal subunit.

It localises to the plastid. Its subcellular location is the chloroplast. This Sinapis alba (White mustard) protein is Large ribosomal subunit protein uL2c (rpl2).